The following is a 201-amino-acid chain: MDTKPPRQRLIGLTGGIATGKSTVTDYLQQKYSVPILDADLYARQAVEPGSEILVAIARRYGPEILDQQGQLKRQALGEIVFNNAEEKQWLESQIHPFVGRCFRSALAQLKQEQTVLLSIPLLFEAQLTDWVTEIWVVTCGPQQQVERLIKRNGLTEAEALARITSQMPLAEKVALADVVLDNSGQIADLEPQIIKAWHHR.

One can recognise a DPCK domain in the interval 10–201 (LIGLTGGIAT…PQIIKAWHHR (192 aa)). 18 to 23 (ATGKST) contacts ATP.

This sequence belongs to the CoaE family.

Its subcellular location is the cytoplasm. The catalysed reaction is 3'-dephospho-CoA + ATP = ADP + CoA + H(+). Its pathway is cofactor biosynthesis; coenzyme A biosynthesis; CoA from (R)-pantothenate: step 5/5. In terms of biological role, catalyzes the phosphorylation of the 3'-hydroxyl group of dephosphocoenzyme A to form coenzyme A. The sequence is that of Dephospho-CoA kinase from Synechocystis sp. (strain ATCC 27184 / PCC 6803 / Kazusa).